We begin with the raw amino-acid sequence, 96 residues long: Conantokin Rl-C (96 aa).

Positions 1-21 (MQLYTYLYLLVPLVTFHLILG) are cleaved as a signal peptide. A propeptide spanning residues 22 to 78 (TGTLDHGDALTERRSADATALKPEPVLLQKSSARSTDDNGKDTQMKRIFKKRRNKAR) is cleaved from the precursor. Positions 36-85 (SADATALKPEPVLLQKSSARSTDDNGKDTQMKRIFKKRRNKARGEEELSE) are disordered. The span at 56–66 (STDDNGKDTQM) shows a compositional bias: basic and acidic residues. Glu81 is an a divalent metal cation binding site. 4-carboxyglutamate occurs at positions 81, 82, 85, 89, and 93. Glu85, Glu89, and Glu93 together coordinate a divalent metal cation. At Asn96 the chain carries Asparagine amide.

The protein belongs to the conotoxin B superfamily. Ca(2+) serves as cofactor. The cofactor is Mg(2+). Expressed by the venom duct.

The protein resides in the secreted. Conantokins inhibit N-methyl-D-aspartate (NMDA) receptors. This toxin has antagonist activity on NR2B/GRIN2B (IC(50)=1.4 uM) and NR2A/GRIN2A (IC(50)=2.9 uM) subunits, when tested on rat receptors. The protein is Conantokin Rl-C of Conus rolani (Cone snail).